Reading from the N-terminus, the 145-residue chain is Ribonuclease H (145 aa).

The region spanning 1–142 is the RNase H type-1 domain; that stretch reads MDTPVYLYTD…ADDLANRGAA (142 aa). Asp-10, Glu-48, Asp-70, and Asp-134 together coordinate Mg(2+).

This sequence belongs to the RNase H family. As to quaternary structure, monomer. Mg(2+) serves as cofactor.

It is found in the cytoplasm. The catalysed reaction is Endonucleolytic cleavage to 5'-phosphomonoester.. Functionally, endonuclease that specifically degrades the RNA of RNA-DNA hybrids. The protein is Ribonuclease H of Neisseria gonorrhoeae (strain ATCC 700825 / FA 1090).